Here is a 668-residue protein sequence, read N- to C-terminus: MIRGLLLGIIWMIFCVCSSFQQETPFVYNNFGHVDHLHLDGSARIIPSGGILQLTNATNSQIGHVFYEKPIEFKSSESVSFSTYFVCALLPAGDPSGHGMTFFVSHSTDFKGAEATRYFGIFNRNGSTSTRVLAVELDTSLASDVKDISDNHVGIDVNSAESITSANASYFSDKEGKKIDIKLLSGDPIQVWVDYEGTTLNVSLAPLRNKKPSRPLLSSTSINLTDILQGRRMFVGFSGSTGSSMSYQYILGWSFSKSMASLPNIDISKLPKVPHSSTKKKSTSPVLSVLLGLIAFIVLGILVVAYLYRRNLYSEVREEWEKEYGPIRYSYKSLYKATKGFNRSEFLGRGGFGEVYKGTLPRSRELREVAVKRVSHDGEHGMKQFVAEIVSMRSLKHRSLVPLLGYCRRKHELLLVSEYMPNGSLDHYLFNHDRLSLPWWRRLAILRDIASALSYLHTEADQVVIHRDIKAANVMLDAEFNGRLGDFGMSRLYDRGADPSTTAAVGTVGYMAPELTTMGASTGTDVYAFGVFLLEVTCGRRPVEPGLPEAKRFLIKWVSECWKRSSLIDARDPRLTEFSSQEVEKVLKLGLLCANLAPDSRPAMEQVVQYLNGNLALPEFWPNSPGIGVLSPMALSPAPLVIPSLSFSSSSSNNSMFITHSVLYGSGR.

The signal sequence occupies residues 1-21; sequence MIRGLLLGIIWMIFCVCSSFQ. Residues 22–285 are Extracellular-facing; the sequence is QETPFVYNNF…SSTKKKSTSP (264 aa). The interval 24–256 is legume-lectin like; that stretch reads TPFVYNNFGH…YQYILGWSFS (233 aa). N-linked (GlcNAc...) asparagine glycans are attached at residues N56, N125, N167, N201, and N223. Residues 286-306 form a helical membrane-spanning segment; the sequence is VLSVLLGLIAFIVLGILVVAY. At 307-668 the chain is on the cytoplasmic side; it reads LYRRNLYSEV…THSVLYGSGR (362 aa). In terms of domain architecture, Protein kinase spans 341–620; the sequence is FNRSEFLGRG…LNGNLALPEF (280 aa). ATP is bound by residues 347 to 355 and K372; that span reads LGRGGFGEV. D468 (proton acceptor) is an active-site residue.

In the C-terminal section; belongs to the protein kinase superfamily. Ser/Thr protein kinase family. The protein in the N-terminal section; belongs to the leguminous lectin family.

Its subcellular location is the cell membrane. It catalyses the reaction L-seryl-[protein] + ATP = O-phospho-L-seryl-[protein] + ADP + H(+). It carries out the reaction L-threonyl-[protein] + ATP = O-phospho-L-threonyl-[protein] + ADP + H(+). In terms of biological role, involved in resistance response to the pathogenic oomycetes Phytophthora infestans and Phytophthora capsici. The protein is L-type lectin-domain containing receptor kinase I.7 of Arabidopsis thaliana (Mouse-ear cress).